The sequence spans 43 residues: uncharacterized protein (43 aa).

This is an uncharacterized protein from Bacillus subtilis (strain 168).